Reading from the N-terminus, the 348-residue chain is Probable dual-specificity RNA methyltransferase RlmN (348 aa).

Glutamate 89 (proton acceptor) is an active-site residue. Residues 95-330 (ERDHYTLCVS…NFVRFSKGVE (236 aa)) enclose the Radical SAM core domain. The cysteines at positions 102 and 335 are disulfide-linked. [4Fe-4S] cluster is bound by residues cysteine 109, cysteine 113, and cysteine 116. S-adenosyl-L-methionine-binding positions include 157–158 (GE), serine 189, 214–216 (SLN), and asparagine 292. Cysteine 335 (S-methylcysteine intermediate) is an active-site residue.

This sequence belongs to the radical SAM superfamily. RlmN family. The cofactor is [4Fe-4S] cluster.

Its subcellular location is the cytoplasm. The catalysed reaction is adenosine(2503) in 23S rRNA + 2 reduced [2Fe-2S]-[ferredoxin] + 2 S-adenosyl-L-methionine = 2-methyladenosine(2503) in 23S rRNA + 5'-deoxyadenosine + L-methionine + 2 oxidized [2Fe-2S]-[ferredoxin] + S-adenosyl-L-homocysteine. It carries out the reaction adenosine(37) in tRNA + 2 reduced [2Fe-2S]-[ferredoxin] + 2 S-adenosyl-L-methionine = 2-methyladenosine(37) in tRNA + 5'-deoxyadenosine + L-methionine + 2 oxidized [2Fe-2S]-[ferredoxin] + S-adenosyl-L-homocysteine. Specifically methylates position 2 of adenine 2503 in 23S rRNA and position 2 of adenine 37 in tRNAs. This chain is Probable dual-specificity RNA methyltransferase RlmN, found in Aquifex aeolicus (strain VF5).